Reading from the N-terminus, the 128-residue chain is Fumarate reductase subunit C (128 aa).

The next 3 membrane-spanning stretches (helical) occupy residues 31–51 (ATCI…ISLG), 67–87 (VVIL…TLYV), and 106–126 (ILKN…LVLV).

Belongs to the FrdC family. As to quaternary structure, part of an enzyme complex containing four subunits: a flavoprotein (FrdA), an iron-sulfur protein (FrdB), and two hydrophobic anchor proteins (FrdC and FrdD).

The protein localises to the cell inner membrane. In terms of biological role, anchors the catalytic components of the fumarate reductase complex to the cell membrane, binds quinones. This Haemophilus ducreyi (strain 35000HP / ATCC 700724) protein is Fumarate reductase subunit C.